Here is a 223-residue protein sequence, read N- to C-terminus: Uracil-DNA glycosylase (223 aa).

D67 acts as the Proton acceptor in catalysis.

This sequence belongs to the uracil-DNA glycosylase (UDG) superfamily. UNG family.

The protein localises to the cytoplasm. It catalyses the reaction Hydrolyzes single-stranded DNA or mismatched double-stranded DNA and polynucleotides, releasing free uracil.. In terms of biological role, excises uracil residues from the DNA which can arise as a result of misincorporation of dUMP residues by DNA polymerase or due to deamination of cytosine. The polypeptide is Uracil-DNA glycosylase (Borrelia duttonii (strain Ly)).